The following is a 511-amino-acid chain: Intermediate cleaving peptidase 55 (511 aa).

Mn(2+) is bound by residues Asp-327, Asp-338, His-417, Glu-444, and Glu-467.

This sequence belongs to the peptidase M24B family. It depends on Mn(2+) as a cofactor.

The protein localises to the nucleus. Its subcellular location is the mitochondrion inner membrane. It carries out the reaction The enzyme cleaves the 36-Pro-Pro-37 bond of cysteine desulfurase (EC 2.8.1.7) removing three amino acid residues (Tyr-Ser-Pro) from the N-terminus after cleavage by mitochondrial processing peptidase.. Its function is as follows. Aminopeptidase which cleaves preprotein intermediates that carry destabilizing N-ter amino acid residues after the mitochondrial processing peptidase (MPP) cleavage site and is thus critical for stabilization of the mitochondrial proteome. The chain is Intermediate cleaving peptidase 55 (ICP55) from Saccharomyces cerevisiae (strain ATCC 204508 / S288c) (Baker's yeast).